Here is a 39-residue protein sequence, read N- to C-terminus: Photosystem II reaction center protein J (39 aa).

Residues 7–27 form a helical membrane-spanning segment; that stretch reads IPLWIVAVVVGLGVVTVVGLF.

The protein belongs to the PsbJ family. In terms of assembly, PSII is composed of 1 copy each of membrane proteins PsbA, PsbB, PsbC, PsbD, PsbE, PsbF, PsbH, PsbI, PsbJ, PsbK, PsbL, PsbM, PsbT, PsbX, PsbY, PsbZ, Psb30/Ycf12, peripheral proteins PsbO, CyanoQ (PsbQ), PsbU, PsbV and a large number of cofactors. It forms dimeric complexes.

The protein localises to the cellular thylakoid membrane. One of the components of the core complex of photosystem II (PSII). PSII is a light-driven water:plastoquinone oxidoreductase that uses light energy to abstract electrons from H(2)O, generating O(2) and a proton gradient subsequently used for ATP formation. It consists of a core antenna complex that captures photons, and an electron transfer chain that converts photonic excitation into a charge separation. This Synechococcus sp. (strain JA-3-3Ab) (Cyanobacteria bacterium Yellowstone A-Prime) protein is Photosystem II reaction center protein J.